Consider the following 476-residue polypeptide: ATP synthase subunit beta (476 aa).

158 to 165 (GGAGVGKT) contributes to the ATP binding site.

The protein belongs to the ATPase alpha/beta chains family. In terms of assembly, F-type ATPases have 2 components, CF(1) - the catalytic core - and CF(0) - the membrane proton channel. CF(1) has five subunits: alpha(3), beta(3), gamma(1), delta(1), epsilon(1). CF(0) has three main subunits: a(1), b(2) and c(9-12). The alpha and beta chains form an alternating ring which encloses part of the gamma chain. CF(1) is attached to CF(0) by a central stalk formed by the gamma and epsilon chains, while a peripheral stalk is formed by the delta and b chains.

It is found in the cell inner membrane. It carries out the reaction ATP + H2O + 4 H(+)(in) = ADP + phosphate + 5 H(+)(out). Functionally, produces ATP from ADP in the presence of a proton gradient across the membrane. The catalytic sites are hosted primarily by the beta subunits. This is ATP synthase subunit beta from Paracidovorax citrulli (strain AAC00-1) (Acidovorax citrulli).